The sequence spans 215 residues: ATP-dependent Clp protease proteolytic subunit (215 aa).

Ser115 serves as the catalytic Nucleophile. Residue His140 is part of the active site.

This sequence belongs to the peptidase S14 family. In terms of assembly, fourteen ClpP subunits assemble into 2 heptameric rings which stack back to back to give a disk-like structure with a central cavity, resembling the structure of eukaryotic proteasomes.

It localises to the cytoplasm. The enzyme catalyses Hydrolysis of proteins to small peptides in the presence of ATP and magnesium. alpha-casein is the usual test substrate. In the absence of ATP, only oligopeptides shorter than five residues are hydrolyzed (such as succinyl-Leu-Tyr-|-NHMec, and Leu-Tyr-Leu-|-Tyr-Trp, in which cleavage of the -Tyr-|-Leu- and -Tyr-|-Trp bonds also occurs).. Its function is as follows. Cleaves peptides in various proteins in a process that requires ATP hydrolysis. Has a chymotrypsin-like activity. Plays a major role in the degradation of misfolded proteins. The sequence is that of ATP-dependent Clp protease proteolytic subunit from Anaplasma marginale (strain Florida).